We begin with the raw amino-acid sequence, 477 residues long: Glycogen synthase (477 aa).

Residue K15 participates in ADP-alpha-D-glucose binding.

This sequence belongs to the glycosyltransferase 1 family. Bacterial/plant glycogen synthase subfamily.

It carries out the reaction [(1-&gt;4)-alpha-D-glucosyl](n) + ADP-alpha-D-glucose = [(1-&gt;4)-alpha-D-glucosyl](n+1) + ADP + H(+). The protein operates within glycan biosynthesis; glycogen biosynthesis. Its function is as follows. Synthesizes alpha-1,4-glucan chains using ADP-glucose. In Escherichia fergusonii (strain ATCC 35469 / DSM 13698 / CCUG 18766 / IAM 14443 / JCM 21226 / LMG 7866 / NBRC 102419 / NCTC 12128 / CDC 0568-73), this protein is Glycogen synthase.